The sequence spans 202 residues: Holliday junction branch migration complex subunit RuvA (202 aa).

The segment at 1-64 is domain I; it reads MISRLRGTVL…EDAFDLFGFL (64 aa). The interval 65–143 is domain II; that stretch reads TKGEEEVFLL…TIHLEAVSRG (79 aa). A flexible linker region spans residues 143 to 147; that stretch reads GTAPA. The interval 148–202 is domain III; the sequence is AVSGAHADLVSALLNLGYKQPQAEKAADLASERLGAEATFQALFREALKALRSGG.

The protein belongs to the RuvA family. Homotetramer. Forms an RuvA(8)-RuvB(12)-Holliday junction (HJ) complex. HJ DNA is sandwiched between 2 RuvA tetramers; dsDNA enters through RuvA and exits via RuvB. An RuvB hexamer assembles on each DNA strand where it exits the tetramer. Each RuvB hexamer is contacted by two RuvA subunits (via domain III) on 2 adjacent RuvB subunits; this complex drives branch migration. In the full resolvosome a probable DNA-RuvA(4)-RuvB(12)-RuvC(2) complex forms which resolves the HJ.

Its subcellular location is the cytoplasm. Its function is as follows. The RuvA-RuvB-RuvC complex processes Holliday junction (HJ) DNA during genetic recombination and DNA repair, while the RuvA-RuvB complex plays an important role in the rescue of blocked DNA replication forks via replication fork reversal (RFR). RuvA specifically binds to HJ cruciform DNA, conferring on it an open structure. The RuvB hexamer acts as an ATP-dependent pump, pulling dsDNA into and through the RuvAB complex. HJ branch migration allows RuvC to scan DNA until it finds its consensus sequence, where it cleaves and resolves the cruciform DNA. In Myxococcus xanthus (strain DK1622), this protein is Holliday junction branch migration complex subunit RuvA.